A 751-amino-acid chain; its full sequence is Zinc finger protein 184 (751 aa).

The KRAB domain occupies 28–99 (VTFKDVIVDF…EPSIPVGTCA (72 aa)). Phosphoserine is present on residues Ser-117, Ser-122, and Ser-199. A compositionally biased stretch (polar residues) spans 191 to 202 (SNLVTQEPSPEE). The disordered stretch occupies residues 191-212 (SNLVTQEPSPEETSTKRSIKQN). A Glycyl lysine isopeptide (Lys-Gly) (interchain with G-Cter in SUMO2) cross-link involves residue Lys-206. 19 C2H2-type zinc fingers span residues 222–244 (CKCN…QRTH), 250–272 (YKCN…QRIH), 278–300 (YKCD…QRIH), 306–328 (YKCD…QRIH), 334–356 (YTCN…QKIH), 362–384 (FKCD…QKIH), 390–412 (YKCN…HMIH), 418–440 (YECN…QKTH), 446–468 (YDCA…LKIH), 474–496 (YKCN…RRIH), 502–524 (FECS…QKTH), 530–552 (YECK…ERIH), 558–580 (YQCH…RKIH), 586–608 (YKCN…KRIH), 614–636 (YECA…QKTH), 642–664 (YQCN…QRIH), 670–692 (YKCN…QNTH), 698–720 (YNCN…QRIH), and 726–748 (FGCN…QRLH).

Belongs to the krueppel C2H2-type zinc-finger protein family. Predominant expression in testis.

The protein localises to the nucleus. In terms of biological role, may be involved in transcriptional regulation. This Homo sapiens (Human) protein is Zinc finger protein 184 (ZNF184).